The following is a 79-amino-acid chain: Protein S100-G (79 aa).

Position 2 is an N-acetylserine (serine 2). 2 consecutive EF-hand domains span residues 13-48 (IFEK…KGPS) and 45-79 (KGPS…KISQ). Residues glutamine 26 and glutamate 31 each coordinate Ca(2+). Serine 42 is subject to Phosphoserine. Ca(2+) is bound by residues aspartate 58, asparagine 60, aspartate 62, glutamate 64, and glutamate 69.

The protein belongs to the S-100 family.

In Bos taurus (Bovine), this protein is Protein S100-G (S100G).